A 508-amino-acid polypeptide reads, in one-letter code: Phenylalanine--tRNA ligase alpha subunit (508 aa).

A2 is modified (N-acetylalanine). A Phosphothreonine modification is found at T190. A phosphoserine mark is found at S193 and S301. K311 carries the post-translational modification N6-acetyllysine. L-phenylalanine contacts are provided by residues T329, 372 to 374, and Y412; that span reads QIE. A Mg(2+)-binding site is contributed by E414. F438 is an L-phenylalanine binding site.

It belongs to the class-II aminoacyl-tRNA synthetase family. Phe-tRNA synthetase alpha subunit type 2 subfamily. As to quaternary structure, heterotetramer; dimer of two heterodimers formed by FARSA and FARSB. Requires Mg(2+) as cofactor.

The protein localises to the cytoplasm. The enzyme catalyses tRNA(Phe) + L-phenylalanine + ATP = L-phenylalanyl-tRNA(Phe) + AMP + diphosphate + H(+). The polypeptide is Phenylalanine--tRNA ligase alpha subunit (FARSA) (Pongo abelii (Sumatran orangutan)).